Reading from the N-terminus, the 45-residue chain is Monellin chain A (45 aa).

As to quaternary structure, heterodimer of an A chain and a B chain.

In terms of biological role, taste-modifying protein; intensely sweet-tasting protein. The sequence is that of Monellin chain A from Dioscoreophyllum cumminsii (Serendipity berry).